We begin with the raw amino-acid sequence, 130 residues long: UPF0212 protein TSIB_1358 (130 aa).

Belongs to the UPF0212 family.

This Thermococcus sibiricus (strain DSM 12597 / MM 739) protein is UPF0212 protein TSIB_1358.